An 807-amino-acid polypeptide reads, in one-letter code: Glycerol-3-phosphate acyltransferase (807 aa).

The HXXXXD motif motif lies at 305-310 (CHRSHM).

It belongs to the GPAT/DAPAT family.

Its subcellular location is the cell inner membrane. It catalyses the reaction sn-glycerol 3-phosphate + an acyl-CoA = a 1-acyl-sn-glycero-3-phosphate + CoA. It participates in phospholipid metabolism; CDP-diacylglycerol biosynthesis; CDP-diacylglycerol from sn-glycerol 3-phosphate: step 1/3. This is Glycerol-3-phosphate acyltransferase from Aliivibrio salmonicida (strain LFI1238) (Vibrio salmonicida (strain LFI1238)).